Reading from the N-terminus, the 456-residue chain is tRNA-2-methylthio-N(6)-dimethylallyladenosine synthase (456 aa).

The region spanning 6-125 (KRLFIKTYGC…LPELIAQAHR (120 aa)) is the MTTase N-terminal domain. Positions 15, 51, 88, 163, 167, and 170 each coordinate [4Fe-4S] cluster. Residues 149–385 (QVEGYSAFVT…QELLSDQQAA (237 aa)) form the Radical SAM core domain. The TRAM domain occupies 388–450 (ESMIGRTLPV…RNSLSGSLTG (63 aa)).

It belongs to the methylthiotransferase family. MiaB subfamily. Monomer. It depends on [4Fe-4S] cluster as a cofactor.

It is found in the cytoplasm. The enzyme catalyses N(6)-dimethylallyladenosine(37) in tRNA + (sulfur carrier)-SH + AH2 + 2 S-adenosyl-L-methionine = 2-methylsulfanyl-N(6)-dimethylallyladenosine(37) in tRNA + (sulfur carrier)-H + 5'-deoxyadenosine + L-methionine + A + S-adenosyl-L-homocysteine + 2 H(+). In terms of biological role, catalyzes the methylthiolation of N6-(dimethylallyl)adenosine (i(6)A), leading to the formation of 2-methylthio-N6-(dimethylallyl)adenosine (ms(2)i(6)A) at position 37 in tRNAs that read codons beginning with uridine. The sequence is that of tRNA-2-methylthio-N(6)-dimethylallyladenosine synthase from Maricaulis maris (strain MCS10) (Caulobacter maris).